Here is a 339-residue protein sequence, read N- to C-terminus: Replication factor C subunit 4 (339 aa).

Glycine 49 to threonine 56 is a binding site for ATP.

This sequence belongs to the activator 1 small subunits family. In terms of assembly, heterotetramer of subunits RFC2, RFC3, RFC4 and RFC5 that can form a complex with RFC1.

Its subcellular location is the nucleus. Functionally, may be involved in DNA replication and thus regulate cell proliferation. In Arabidopsis thaliana (Mouse-ear cress), this protein is Replication factor C subunit 4 (RFC4).